A 258-amino-acid polypeptide reads, in one-letter code: UPF0246 protein VV1_0535 (258 aa).

This sequence belongs to the UPF0246 family.

The protein is UPF0246 protein VV1_0535 of Vibrio vulnificus (strain CMCP6).